Consider the following 388-residue polypeptide: Spermosin (388 aa).

The signal sequence occupies residues 1–22 (MAAINVIFISGAIALFALTGSC). Polar residues predominate over residues 29 to 49 (FTNKPYATQNPYSPPQTNQPT). Residues 29 to 98 (FTNKPYATQN…SENSESENSE (70 aa)) form a disordered region. Over residues 54 to 64 (QPGPAPTPAPY) the composition is skewed to pro residues. Cystine bridges form between cysteine 116-cysteine 251, cysteine 163-cysteine 179, cysteine 265-cysteine 330, cysteine 295-cysteine 310, and cysteine 320-cysteine 349. Positions 130-372 (IVGGAEAVPN…NLEWLCCYMP (243 aa)) constitute a Peptidase S1 domain. Residues histidine 178 and aspartate 231 each act as charge relay system in the active site. Serine 324 (charge relay system) is an active-site residue.

It belongs to the peptidase S1 family. In terms of assembly, heterodimer of a heavy chain and either an L1 light chain or an L2 light chain linked by a disulfide bond. In terms of tissue distribution, detected in sperm, but not in unfertilized eggs (at protein level). Expressed in gonad, but not in hepatopancreas, intestine or branchial basket.

The protein localises to the secreted. The enzyme catalyses Hydrolyzes arginyl bonds, preferably with Pro in the P2 position.. Inhibited by peptidyl-argininals with Pro in the P2 position, diisopropyl fluorophosphate, phenylmethanesulfonyl fluoride, leupeptin, antipain, soybean trypsin inhibitor, aprotinin, ovomucoid, valyl-prolyl-arginyl-chloromethane, glycyl-valyl-arginyl-chloromethane, p-aminobenzamidine, benzamidine, zinc chloride and mercuric chloride. Its function is as follows. Trypsin-like protease with a narrow substrate specificity. Preferentially hydrolyzes substrates with Pro in the P2 position and Val in the P3 position. Plays a role in fertilization. The sequence is that of Spermosin from Halocynthia roretzi (Sea squirt).